We begin with the raw amino-acid sequence, 72 residues long: Large ribosomal subunit protein bL31 (72 aa).

This sequence belongs to the bacterial ribosomal protein bL31 family. Type A subfamily. As to quaternary structure, part of the 50S ribosomal subunit.

Its function is as follows. Binds the 23S rRNA. This Rhodospirillum rubrum (strain ATCC 11170 / ATH 1.1.1 / DSM 467 / LMG 4362 / NCIMB 8255 / S1) protein is Large ribosomal subunit protein bL31.